A 181-amino-acid polypeptide reads, in one-letter code: UPF0340 protein OB2986 (181 aa).

The protein belongs to the UPF0340 family.

The sequence is that of UPF0340 protein OB2986 from Oceanobacillus iheyensis (strain DSM 14371 / CIP 107618 / JCM 11309 / KCTC 3954 / HTE831).